We begin with the raw amino-acid sequence, 250 residues long: Cell division protein ZapD (250 aa).

The protein belongs to the ZapD family. Interacts with FtsZ.

The protein resides in the cytoplasm. Its function is as follows. Cell division factor that enhances FtsZ-ring assembly. Directly interacts with FtsZ and promotes bundling of FtsZ protofilaments, with a reduction in FtsZ GTPase activity. In Pectobacterium carotovorum subsp. carotovorum (strain PC1), this protein is Cell division protein ZapD.